The sequence spans 766 residues: Single-minded homolog 1 (766 aa).

The region spanning 1–53 (MKEKSKNAARTRREKENSEFYELAKLLPLPSAITSQLDKASIIRLTTSYLKMR) is the bHLH domain. PAS domains are found at residues 77-147 (GREL…QPYH) and 218-288 (PPSA…LVKG). A PAC domain is found at 292 to 335 (TKYYRFLAKHGGWVWVQSYATIVHNSRSSRPHCIVSVNYVLTDT). One can recognise a Single-minded C-terminal domain in the interval 336–766 (EYKGLQLSLD…GTSVIITNGS (431 aa)). Polar residues predominate over residues 353 to 365 (AFSYTSSSTPTMT). Disordered stretches follow at residues 353-431 (AFSY…SQHD) and 528-563 (WDED…EPSK). Positions 368–387 (RKGAKSRLSSSKSKSRTSPY) match the Nuclear localization signal motif. The segment covering 373 to 385 (SRLSSSKSKSRTS) has biased composition (low complexity). The segment covering 394–404 (HTERSESDHDS) has biased composition (basic and acidic residues).

Efficient DNA binding requires dimerization with another bHLH protein. Heterodimer; forms a heterodimer with ARNT, ARNT2.

It localises to the nucleus. In terms of biological role, transcriptional factor that may have pleiotropic effects during embryogenesis and in the adult. This chain is Single-minded homolog 1 (SIM1), found in Homo sapiens (Human).